We begin with the raw amino-acid sequence, 136 residues long: Transcription antitermination protein NusB (136 aa).

Belongs to the NusB family.

Involved in transcription antitermination. Required for transcription of ribosomal RNA (rRNA) genes. Binds specifically to the boxA antiterminator sequence of the ribosomal RNA (rrn) operons. The polypeptide is Transcription antitermination protein NusB (Pseudoalteromonas translucida (strain TAC 125)).